Reading from the N-terminus, the 249-residue chain is Elsinochromes biosynthesis cluster protein HP3 (249 aa).

Asparagine 106 carries N-linked (GlcNAc...) asparagine glycosylation. A helical membrane pass occupies residues 138–158; it reads VVFAFMLSAWLVWLITVYAFA.

It localises to the membrane. In terms of biological role, part of the gene cluster that mediates the biosynthesis of elsinochromes, pigments consisting of at least four interconvertible tautomers (A, B, C and D) that have a core phenolic quinone to which various side chains are attached and which play an important role in fungal pathogenesis. The non-reducing polyketide synthase PKS1 was proposed to iteratively catalyze decarboxylation between acetyl-CoA and malonyl-CoA subunits for polyketide chain elongation. The released polyketide undergoes cyclization to form an aromatic ring, and proceeds via serial modification steps to produce the heptaketide back- bone of elsinochrome. As elsinochrome has a symmetrical structure, two identical heptaketides are fused to form a core 1,2-dihydrobenzo-perylene ring structure, which can then be successively modified to produce the various derivatives of elsinochrome. Some of these reactions may be cooperatively carried out, at least in part, by the products of RDT1, OXR1 and PKS1. PRF1, embedded within the elsinochrome cluster possibly functions to stabilize some of the biosynthetic enzymes required for elsinochrome production. As prefoldin is a hexamer containing 2 a and 4 b subunits, additional prefoldin subunits, whose coding genes may not immediately link to the elsinochrome biosynthetic gene cluster, are required to fulfill the chaperone function. In addition, no methyltransferase-coding gene exists within the biosynthetic gene cluster, even though elsinochrome has four methyl groups at positions C3, C7, C8 and C12. Apparently, the identified gene cluster does not contain the entire entourage of genes responsible for elsinochrome biosynthesis. Once elsinochrome is synthesized, it must be exported outside the fungal cells, which is probably accomplished by the ECT1 transporter, to avoid toxicity. The polypeptide is Elsinochromes biosynthesis cluster protein HP3 (Elsinoe fawcettii (Citrus scab fungus)).